Here is a 251-residue protein sequence, read N- to C-terminus: Anamorsin homolog (251 aa).

Residues 1–154 (MINFSNTLVI…AENPDFNKSD (154 aa)) form an N-terminal SAM-like domain region. The segment at 155-167 (DDNNLVSSDEEIY) is linker. [2Fe-2S] cluster is bound by residues Cys-170, Cys-181, Cys-184, and Cys-186. Positions 170–186 (CEDKKKVVNRVCDNCTC) are fe-S binding site A. Cys-216, Cys-219, Cys-227, and Cys-230 together coordinate [4Fe-4S] cluster. Short sequence motifs (cx2C motif) lie at residues 216 to 219 (CGNC) and 227 to 230 (CGSC). Residues 216-230 (CGNCYLGDAFRCGSC) form a fe-S binding site B region.

This sequence belongs to the anamorsin family. As to quaternary structure, monomer. Requires [2Fe-2S] cluster as cofactor. The cofactor is [4Fe-4S] cluster.

Its subcellular location is the cytoplasm. The protein localises to the mitochondrion intermembrane space. In terms of biological role, component of the cytosolic iron-sulfur (Fe-S) protein assembly (CIA) machinery. Required for the maturation of extramitochondrial Fe-S proteins. Part of an electron transfer chain functioning in an early step of cytosolic Fe-S biogenesis, facilitating the de novo assembly of a [4Fe-4S] cluster on the cytosolic Fe-S scaffold complex. Electrons are transferred from NADPH via a FAD- and FMN-containing diflavin oxidoreductase. Together with the diflavin oxidoreductase, also required for the assembly of the diferric tyrosyl radical cofactor of ribonucleotide reductase (RNR), probably by providing electrons for reduction during radical cofactor maturation in the catalytic small subunit. This chain is Anamorsin homolog, found in Plasmodium yoelii yoelii.